The chain runs to 460 residues: Serine--tRNA ligase (460 aa).

The span at 43-66 (AEGDGLRQERNEVSSKIGELKQDG) shows a compositional bias: basic and acidic residues. A disordered region spans residues 43 to 81 (AEGDGLRQERNEVSSKIGELKQDGKDEEAQEAIDRSQEL). Position 242-244 (242-244 (TAE)) interacts with L-serine. Residues 273–275 (RRE) and valine 289 contribute to the ATP site. Glutamate 296 is a binding site for L-serine. Residue 369-372 (EVSS) coordinates ATP. Serine 405 lines the L-serine pocket.

This sequence belongs to the class-II aminoacyl-tRNA synthetase family. Type-1 seryl-tRNA synthetase subfamily. In terms of assembly, homodimer. The tRNA molecule binds across the dimer.

It localises to the cytoplasm. It carries out the reaction tRNA(Ser) + L-serine + ATP = L-seryl-tRNA(Ser) + AMP + diphosphate + H(+). The enzyme catalyses tRNA(Sec) + L-serine + ATP = L-seryl-tRNA(Sec) + AMP + diphosphate + H(+). Its pathway is aminoacyl-tRNA biosynthesis; selenocysteinyl-tRNA(Sec) biosynthesis; L-seryl-tRNA(Sec) from L-serine and tRNA(Sec): step 1/1. Functionally, catalyzes the attachment of serine to tRNA(Ser). Is also probably able to aminoacylate tRNA(Sec) with serine, to form the misacylated tRNA L-seryl-tRNA(Sec), which will be further converted into selenocysteinyl-tRNA(Sec). This Haloarcula marismortui (strain ATCC 43049 / DSM 3752 / JCM 8966 / VKM B-1809) (Halobacterium marismortui) protein is Serine--tRNA ligase (serS).